Here is a 416-residue protein sequence, read N- to C-terminus: MRVACRRPHHLTYRHTAYTIIIFYILHRVTCNSTTTNTASITSPNTASTTFVTSVFSTPNNNTSTTPHTSVTSQASTIGNITNVTSDLSTFTTVYSTFNTSYANISNTAATTELISTNTNTILSFTNVTANATSSYNTTITVTITSDETSHNVSTNTALISTPWLTNCSATTYTTYNRTNSSNACHTETTIIRFKETNTTGIEGSNVTIKGNSTWDCLSVAWIRHYNRSTHGHHLGHRKNAHTQSWYWLRILTSHTVCHSQHERPSLYHDLCRSCNNTELHLYDLNITNSGRYSRRCFKENYFTGHHEDENFYLLVTPKNHTEAINATFVCPRYNTDIENEDREKGSQHTNNTHHHKRNLYHSSQRSRTVWTIVLVCMACIVLFFARRAFNKKYHMLQDTVSESEFIVRYHTEHED.

Residues 341-360 (EDREKGSQHTNNTHHHKRNL) are disordered.

This is an uncharacterized protein from Human cytomegalovirus (strain AD169) (HHV-5).